The sequence spans 311 residues: Ribosomal RNA small subunit methyltransferase H 1 (311 aa).

Residues 33–35 (AGH), D53, F80, D101, and Q108 contribute to the S-adenosyl-L-methionine site.

This sequence belongs to the methyltransferase superfamily. RsmH family.

It localises to the cytoplasm. The catalysed reaction is cytidine(1402) in 16S rRNA + S-adenosyl-L-methionine = N(4)-methylcytidine(1402) in 16S rRNA + S-adenosyl-L-homocysteine + H(+). Its function is as follows. Specifically methylates the N4 position of cytidine in position 1402 (C1402) of 16S rRNA. This chain is Ribosomal RNA small subunit methyltransferase H 1, found in Alkaliphilus metalliredigens (strain QYMF).